Consider the following 137-residue polypeptide: ATP synthase epsilon chain (137 aa).

It belongs to the ATPase epsilon chain family. In terms of assembly, F-type ATPases have 2 components, CF(1) - the catalytic core - and CF(0) - the membrane proton channel. CF(1) has five subunits: alpha(3), beta(3), gamma(1), delta(1), epsilon(1). CF(0) has three main subunits: a, b and c.

It localises to the cell membrane. Its function is as follows. Produces ATP from ADP in the presence of a proton gradient across the membrane. The polypeptide is ATP synthase epsilon chain (Desulforudis audaxviator (strain MP104C)).